A 294-amino-acid polypeptide reads, in one-letter code: Bifunctional protein FolD (294 aa).

Residues 176–178, serine 201, and isoleucine 242 contribute to the NADP(+) site; that span reads GAS.

It belongs to the tetrahydrofolate dehydrogenase/cyclohydrolase family. In terms of assembly, homodimer.

The catalysed reaction is (6R)-5,10-methylene-5,6,7,8-tetrahydrofolate + NADP(+) = (6R)-5,10-methenyltetrahydrofolate + NADPH. It carries out the reaction (6R)-5,10-methenyltetrahydrofolate + H2O = (6R)-10-formyltetrahydrofolate + H(+). It participates in one-carbon metabolism; tetrahydrofolate interconversion. Its function is as follows. Catalyzes the oxidation of 5,10-methylenetetrahydrofolate to 5,10-methenyltetrahydrofolate and then the hydrolysis of 5,10-methenyltetrahydrofolate to 10-formyltetrahydrofolate. This chain is Bifunctional protein FolD, found in Bordetella petrii (strain ATCC BAA-461 / DSM 12804 / CCUG 43448).